The following is a 184-amino-acid chain: 3-hydroxyanthranilate 3,4-dioxygenase (184 aa).

Residue Arg44 participates in O2 binding. Fe cation contacts are provided by His48, Glu54, and His92. Glu54 serves as a coordination point for substrate. Positions 96 and 106 each coordinate substrate. Positions 121, 126, 162, and 165 each coordinate a divalent metal cation.

The protein belongs to the 3-HAO family. Requires Fe(2+) as cofactor.

It is found in the cytoplasm. The enzyme catalyses 3-hydroxyanthranilate + O2 = (2Z,4Z)-2-amino-3-carboxymuconate 6-semialdehyde. It participates in cofactor biosynthesis; NAD(+) biosynthesis; quinolinate from L-kynurenine: step 3/3. Functionally, catalyzes the oxidative ring opening of 3-hydroxyanthranilate to 2-amino-3-carboxymuconate semialdehyde, which spontaneously cyclizes to quinolinate. This Pyricularia oryzae (strain 70-15 / ATCC MYA-4617 / FGSC 8958) (Rice blast fungus) protein is 3-hydroxyanthranilate 3,4-dioxygenase.